The chain runs to 2012 residues: Cell adhesion molecule DSCAM (2012 aa).

Residues Met-1–Ser-17 form the signal peptide. The Extracellular segment spans residues Glu-18–Met-1595. N-linked (GlcNAc...) asparagine glycans are attached at residues Asn-28 and Asn-78. 9 Ig-like C2-type domains span residues Thr-39–Arg-129, Pro-125–Phe-216, Pro-225–Ile-305, Pro-313–Val-401, Pro-407–Asn-500, Pro-504–Thr-592, Pro-596–Ile-685, Pro-690–Thr-783, and Pro-787–Gln-883. 5 disulfide bridges follow: Cys-46–Cys-102, Cys-145–Cys-197, Cys-246–Cys-293, Cys-335–Cys-385, and Cys-428–Cys-484. Residues Asn-470, Asn-487, Asn-512, Asn-556, Asn-658, Asn-666, Asn-710, Asn-748, and Asn-795 are each glycosylated (N-linked (GlcNAc...) asparagine). 2 disulfide bridges follow: Cys-525–Cys-575 and Cys-617–Cys-669. Cys-711 and Cys-766 are disulfide-bonded. Residues Cys-809 and Cys-865 are joined by a disulfide bond. Fibronectin type-III domains are found at residues Pro-885–Ala-982, Pro-987–Asp-1086, Pro-1091–Asp-1187, and Pro-1191–Pro-1285. N-linked (GlcNAc...) asparagine glycosylation is present at Asn-924. N-linked (GlcNAc...) asparagine glycosylation is found at Asn-1142, Asn-1160, Asn-1250, Asn-1271, and Asn-1341. The 93-residue stretch at Pro-1285 to Gln-1377 folds into the Ig-like C2-type 10 domain. The cysteines at positions 1307 and 1359 are disulfide-linked. Fibronectin type-III domains lie at Pro-1379–Lys-1473 and Glu-1474–Pro-1575. Asn-1488 carries an N-linked (GlcNAc...) asparagine glycan. Residues Leu-1596–Val-1616 traverse the membrane as a helical segment. The Cytoplasmic segment spans residues Arg-1617–Val-2012. Residues Arg-1617 to Val-2012 form a required for netrin-mediated axon repulsion of neuronal growth cones region. Disordered regions lie at residues Leu-1718 to Thr-1810, Thr-1855 to Arg-1883, and Leu-1971 to Val-2012. A compositionally biased stretch (low complexity) spans Ser-1799–Ser-1809. Positions Thr-1855–Glu-1865 are enriched in polar residues.

As to quaternary structure, homodimer; mediates homophilic interactions to promote cell adhesion. Interacts with DCC; the interaction is abolished in response to NTN1. Interacts (via extracellular domain) with NTN1. Interacts (via extracellular domain) with UNC5C (via Ig-like C2-type domain). Interacts with PTK2. Interacts with FYN. Phosphorylated at tyrosine residues. Phosphorylation is enhanced by NTN1. Primarily expressed in brain.

The protein localises to the secreted. Its subcellular location is the cell membrane. The protein resides in the cell projection. It is found in the axon. It localises to the dendrite. The protein localises to the growth cone. Its subcellular location is the synapse. In terms of biological role, cell adhesion molecule that plays a role in neuronal self-avoidance. Promotes repulsion between specific neuronal processes of either the same cell or the same subtype of cells. Mediates within retinal amacrine and ganglion cell subtypes both isoneuronal self-avoidance for creating an orderly dendritic arborization and heteroneuronal self-avoidance to maintain the mosaic spacing between amacrine and ganglion cell bodies. Receptor for netrin required for axon guidance independently of and in collaboration with the receptor DCC. Might also collaborate with UNC5C in NTN1-mediated axon repulsion independently of DCC. In spinal cord development plays a role in guiding commissural axons projection and pathfinding across the ventral midline to reach the floor plate upon ligand binding. Mediates intracellular signaling by stimulating the activation of MAPK8 and MAP kinase p38. Adhesion molecule that promotes lamina-specific synaptic connections in the retina: expressed in specific subsets of interneurons and retinal ganglion cells (RGCs) and promotes synaptic connectivity via homophilic interactions. This chain is Cell adhesion molecule DSCAM (DSCAM), found in Homo sapiens (Human).